Consider the following 425-residue polypeptide: MLDLKRIRTDFDTVAAKLKTRGVSEAILTSLKALDEQRRTLLVQTEELKAQRNIASAAIAQAKRQKEDASQQIADMQQLAANIKAIDAKLADIDQEITGIITVLPNTPHDSVPIGADEEDNVEIHRWGKPRQFDFDIKAHWDLGEALDILDWERGAKVTGARFLFYKNLGARLERALYNFMLDEHLKEGYQEIIPPYMVNHDSMFGTGQYPKFKEDTFELDGTNFVLIPTAEVPLTNYYRGDIIDGKELPIYFTAMSPSFRSEAGSAGRDTRGLIRLHQFHKVEMVKFAKPETSYEELEKMTANAEHILQKLKLPYRVLALCTGDMGFSAAKTYDLEVWIPAQNTYREISSCSNTEDFQARRAQIRYRDEADGKVKLLHTLNGSGLAVGRTVAAILENYQNEDGSVTIPEVLRPYMGGLEVIKPR.

L-serine is bound at residue Thr-230–Glu-232. Arg-261–Glu-263 serves as a coordination point for ATP. Glu-284 is a binding site for L-serine. ATP is bound at residue Glu-348–Ser-351. Ser-384 contributes to the L-serine binding site.

This sequence belongs to the class-II aminoacyl-tRNA synthetase family. Type-1 seryl-tRNA synthetase subfamily. As to quaternary structure, homodimer. The tRNA molecule binds across the dimer.

It is found in the cytoplasm. It catalyses the reaction tRNA(Ser) + L-serine + ATP = L-seryl-tRNA(Ser) + AMP + diphosphate + H(+). The catalysed reaction is tRNA(Sec) + L-serine + ATP = L-seryl-tRNA(Sec) + AMP + diphosphate + H(+). The protein operates within aminoacyl-tRNA biosynthesis; selenocysteinyl-tRNA(Sec) biosynthesis; L-seryl-tRNA(Sec) from L-serine and tRNA(Sec): step 1/1. Its function is as follows. Catalyzes the attachment of serine to tRNA(Ser). Is also able to aminoacylate tRNA(Sec) with serine, to form the misacylated tRNA L-seryl-tRNA(Sec), which will be further converted into selenocysteinyl-tRNA(Sec). The protein is Serine--tRNA ligase of Streptococcus equi subsp. equi (strain 4047).